Reading from the N-terminus, the 462-residue chain is A-type ATP synthase subunit B (462 aa).

The protein belongs to the ATPase alpha/beta chains family. Has multiple subunits with at least A(3), B(3), C, D, E, F, H, I and proteolipid K(x).

It localises to the cell membrane. Component of the A-type ATP synthase that produces ATP from ADP in the presence of a proton gradient across the membrane. The B chain is a regulatory subunit. In Methanococcus maripaludis (strain C7 / ATCC BAA-1331), this protein is A-type ATP synthase subunit B.